A 798-amino-acid chain; its full sequence is Acetamidase regulatory protein (798 aa).

Positions 20–50 (CVHCHRRKVRCDARLVGLPCSNCRSAGKTDC) form a DNA-binding region, zn(2)-C6 fungal-type. Disordered regions lie at residues 68–96 (VPIRCRPPNPEEAPKPISSLSPSSEPPNA), 115–172 (ANRV…ESRA), and 632–714 (LRTT…TLSA). 2 stretches are compositionally biased toward low complexity: residues 82 to 94 (KPISSLSPSSEPP) and 133 to 147 (TRSNNNSGNNTQYQN). Basic and acidic residues predominate over residues 632 to 641 (LRTTTSDRPR). The segment covering 644 to 663 (SNLSNNSTNSPASQQKNTSG) has biased composition (polar residues). A compositionally biased stretch (pro residues) spans 678–687 (PSAPSIPPLQ).

The protein resides in the nucleus. Positively regulates the expression of 5 genes involved in the catabolism of certain amides (amdS), omega amino acids (gatA and gabA), and lactams (lamA and lamB) in the presence of omega amino acid inducers. The polypeptide is Acetamidase regulatory protein (amdR) (Emericella nidulans (strain FGSC A4 / ATCC 38163 / CBS 112.46 / NRRL 194 / M139) (Aspergillus nidulans)).